The primary structure comprises 676 residues: DNA-directed RNA polymerase subunit beta' (676 aa).

4 residues coordinate Zn(2+): Cys-69, Cys-71, Cys-87, and Cys-90. 3 residues coordinate Mg(2+): Asp-485, Asp-487, and Asp-489.

The protein belongs to the RNA polymerase beta' chain family. RpoC1 subfamily. In plastids the minimal PEP RNA polymerase catalytic core is composed of four subunits: alpha, beta, beta', and beta''. When a (nuclear-encoded) sigma factor is associated with the core the holoenzyme is formed, which can initiate transcription. Requires Mg(2+) as cofactor. Zn(2+) serves as cofactor.

The protein localises to the plastid. Its subcellular location is the chloroplast. The catalysed reaction is RNA(n) + a ribonucleoside 5'-triphosphate = RNA(n+1) + diphosphate. Functionally, DNA-dependent RNA polymerase catalyzes the transcription of DNA into RNA using the four ribonucleoside triphosphates as substrates. The chain is DNA-directed RNA polymerase subunit beta' from Fagopyrum esculentum subsp. ancestrale (Wild buckwheat).